A 209-amino-acid polypeptide reads, in one-letter code: Pyridoxine/pyridoxamine 5'-phosphate oxidase (209 aa).

Substrate-binding positions include 5–8 (REEY) and lysine 63. Residues 58–63 (RVVLLK), 73–74 (FT), arginine 79, lysine 80, and glutamine 102 each bind FMN. Substrate-binding residues include tyrosine 120, arginine 124, and serine 128. FMN contacts are provided by residues 137–138 (QS) and tryptophan 181. A substrate-binding site is contributed by 187–189 (RLH). An FMN-binding site is contributed by arginine 191.

Belongs to the pyridoxamine 5'-phosphate oxidase family. As to quaternary structure, homodimer. FMN serves as cofactor.

It carries out the reaction pyridoxamine 5'-phosphate + O2 + H2O = pyridoxal 5'-phosphate + H2O2 + NH4(+). It catalyses the reaction pyridoxine 5'-phosphate + O2 = pyridoxal 5'-phosphate + H2O2. The protein operates within cofactor metabolism; pyridoxal 5'-phosphate salvage; pyridoxal 5'-phosphate from pyridoxamine 5'-phosphate: step 1/1. It functions in the pathway cofactor metabolism; pyridoxal 5'-phosphate salvage; pyridoxal 5'-phosphate from pyridoxine 5'-phosphate: step 1/1. Catalyzes the oxidation of either pyridoxine 5'-phosphate (PNP) or pyridoxamine 5'-phosphate (PMP) into pyridoxal 5'-phosphate (PLP). This Alcanivorax borkumensis (strain ATCC 700651 / DSM 11573 / NCIMB 13689 / SK2) protein is Pyridoxine/pyridoxamine 5'-phosphate oxidase.